We begin with the raw amino-acid sequence, 281 residues long: L-ornithine N(alpha)-acyltransferase (281 aa).

It belongs to the acetyltransferase family. OlsB subfamily.

It carries out the reaction a (3R)-hydroxyacyl-[ACP] + L-ornithine = a lyso-ornithine lipid + holo-[ACP] + H(+). Its pathway is lipid metabolism. In terms of biological role, catalyzes the first step in the biosynthesis of ornithine lipids, which are phosphorus-free membrane lipids. Catalyzes the 3-hydroxyacyl-acyl carrier protein-dependent acylation of ornithine to form lyso-ornithine lipid (LOL). This is L-ornithine N(alpha)-acyltransferase from Brucella abortus (strain 2308).